Consider the following 275-residue polypeptide: Glutamate racemase (275 aa).

Substrate is bound by residues 10-11 (DS) and 42-43 (YG). Cys74 serves as the catalytic Proton donor/acceptor. 75–76 (NT) is a binding site for substrate. Cys189 acts as the Proton donor/acceptor in catalysis. Residue 190-191 (TH) participates in substrate binding.

It belongs to the aspartate/glutamate racemases family.

The catalysed reaction is L-glutamate = D-glutamate. The protein operates within cell wall biogenesis; peptidoglycan biosynthesis. Provides the (R)-glutamate required for cell wall biosynthesis. The polypeptide is Glutamate racemase (Bartonella tribocorum (strain CIP 105476 / IBS 506)).